The following is a 458-amino-acid chain: Protein adenylyltransferase FICD (458 aa).

Over 1–23 the chain is Cytoplasmic; sequence MILMPMASVVAVAEPKWVSVWGR. A helical; Signal-anchor for type II membrane protein membrane pass occupies residues 24–44; it reads FLWMALLSMALGSLLALLLPL. At 45–458 the chain is on the lumenal side; sequence GVVEEHCLAV…GFKETLPVRP (414 aa). Thr80 carries the post-translational modification O-AMP-threonine; by autocatalysis. TPR repeat units follow at residues 106 to 139 and 140 to 173; these read AKAALNQALEMKRQGKRGKAHKLFLHALKMDPGF and VDALNEFGIFSEEDKDIIQADYLYTRALTISPFH. At Thr183 the chain carries O-AMP-threonine; by autocatalysis. The Inhibitory (S/T)XXXE(G/N) motif signature appears at 230–235; that stretch reads TVAIEG. Glu234 contacts ATP. A glycan (N-linked (GlcNAc...) asparagine) is linked at Asn275. Residues 285 to 420 enclose the Fido domain; sequence VTMDDMLEIH…VRPFIRFIAK (136 aa). Residue 316 to 319 participates in ATP binding; that stretch reads VGHH. Residue His363 is part of the active site. Residues 367 to 374, 399 to 400, and Asn407 contribute to the ATP site; these read DGNGRTSR and YY.

The protein belongs to the fic family. In terms of assembly, homodimer. Interacts with HD. Mg(2+) is required as a cofactor. Mn(2+) serves as cofactor. Auto-AMPylated in vitro.

It localises to the endoplasmic reticulum membrane. It catalyses the reaction L-tyrosyl-[protein] + ATP = O-(5'-adenylyl)-L-tyrosyl-[protein] + diphosphate. The enzyme catalyses 3-O-(5'-adenylyl)-L-threonyl-[protein] + H2O = L-threonyl-[protein] + AMP + H(+). It carries out the reaction L-threonyl-[protein] + ATP = 3-O-(5'-adenylyl)-L-threonyl-[protein] + diphosphate. With respect to regulation, the side chain of Glu-234 determines which of the two opposing activities (AMPylase or de-AMPylase) will take place. In response to endoplasmic reticulum stress, mediates de-AMPylase activity. Adenylyltransferase activity is inhibited by the inhibitory helix present at the N-terminus: Glu-234 binds ATP and competes with ATP-binding at Arg-374, thereby preventing adenylyltransferase activity. In unstressed cells, disengagement of Glu-234 promotes adenylyltransferase activity. Activation dissociates ATP-binding from Glu-234, allowing ordered binding of the entire ATP moiety with the alpha-phosphate in an orientation that is productive for accepting an incoming target hydroxyl side chain. Protein that can both mediate the addition of adenosine 5'-monophosphate (AMP) to specific residues of target proteins (AMPylation), and the removal of the same modification from target proteins (de-AMPylation), depending on the context. The side chain of Glu-231 determines which of the two opposing activities (AMPylase or de-AMPylase) will take place. Acts as a key regulator of the ERN1/IRE1-mediated unfolded protein response (UPR) by mediating AMPylation or de-AMPylation of HSPA5/BiP. In unstressed cells, acts as an adenylyltransferase by mediating AMPylation of HSPA5/BiP at 'Thr-518', thereby inactivating it. In response to endoplasmic reticulum stress, acts as a phosphodiesterase by mediating removal of ATP (de-AMPylation) from HSPA5/BiP at 'Thr-518', leading to restore HSPA5/BiP activity. Although it is able to AMPylate RhoA, Rac and Cdc42 Rho GTPases in vitro, Rho GTPases do not constitute physiological substrates. The sequence is that of Protein adenylyltransferase FICD from Mus musculus (Mouse).